The following is a 213-amino-acid chain: Orotate phosphoribosyltransferase (213 aa).

Lysine 26 contributes to the 5-phospho-alpha-D-ribose 1-diphosphate binding site. 34–35 (FF) lines the orotate pocket. Residues 72–73 (YK), arginine 99, lysine 100, lysine 103, histidine 105, and 124–132 (DDVITAGTA) each bind 5-phospho-alpha-D-ribose 1-diphosphate. 2 residues coordinate orotate: threonine 128 and arginine 156.

Belongs to the purine/pyrimidine phosphoribosyltransferase family. PyrE subfamily. In terms of assembly, homodimer. Requires Mg(2+) as cofactor.

It carries out the reaction orotidine 5'-phosphate + diphosphate = orotate + 5-phospho-alpha-D-ribose 1-diphosphate. It functions in the pathway pyrimidine metabolism; UMP biosynthesis via de novo pathway; UMP from orotate: step 1/2. In terms of biological role, catalyzes the transfer of a ribosyl phosphate group from 5-phosphoribose 1-diphosphate to orotate, leading to the formation of orotidine monophosphate (OMP). The chain is Orotate phosphoribosyltransferase from Yersinia enterocolitica serotype O:8 / biotype 1B (strain NCTC 13174 / 8081).